We begin with the raw amino-acid sequence, 160 residues long: MSTLKKPNLSDPKLRAKLSKGMGHNYYGEPAWPNDLLYIFPVVILGTIACVVGLAVLDPAFLGDKANPFATPLEILPEWYLYPVFQILRVVPNKLLGIALQTLIPLGLILIPFIENVNKFSNPFRRPVAMAFFLFGTALTIYLGIGACLPIDKSLTLGLF.

3 helical membrane passes run 36–56 (LLYI…GLAV), 95–115 (LLGI…PFIE), and 131–151 (AFFL…CLPI).

The protein belongs to the cytochrome b family. PetD subfamily. The 4 large subunits of the cytochrome b6-f complex are cytochrome b6, subunit IV (17 kDa polypeptide, PetD), cytochrome f and the Rieske protein, while the 4 small subunits are PetG, PetL, PetM and PetN. The complex functions as a dimer.

Its subcellular location is the cellular thylakoid membrane. In terms of biological role, component of the cytochrome b6-f complex, which mediates electron transfer between photosystem II (PSII) and photosystem I (PSI), cyclic electron flow around PSI, and state transitions. This is Cytochrome b6-f complex subunit 4 from Prochlorococcus marinus (strain SARG / CCMP1375 / SS120).